The following is a 237-amino-acid chain: Ribosomal RNA small subunit methyltransferase G (237 aa).

Residues glycine 78, phenylalanine 83, 129-130 (AE), and arginine 148 each bind S-adenosyl-L-methionine. The disordered stretch occupies residues 216–237 (SKKKETPNKYPRKAGTPNKKPL).

The protein belongs to the methyltransferase superfamily. RNA methyltransferase RsmG family.

Its subcellular location is the cytoplasm. In terms of biological role, specifically methylates the N7 position of a guanine in 16S rRNA. This chain is Ribosomal RNA small subunit methyltransferase G, found in Streptococcus agalactiae serotype Ia (strain ATCC 27591 / A909 / CDC SS700).